We begin with the raw amino-acid sequence, 134 residues long: Large ribosomal subunit protein bL12 (134 aa).

The protein belongs to the bacterial ribosomal protein bL12 family. Homodimer. Part of the ribosomal stalk of the 50S ribosomal subunit. Forms a multimeric L10(L12)X complex, where L10 forms an elongated spine to which 2 to 4 L12 dimers bind in a sequential fashion. Binds GTP-bound translation factors.

Its function is as follows. Forms part of the ribosomal stalk which helps the ribosome interact with GTP-bound translation factors. Is thus essential for accurate translation. This is Large ribosomal subunit protein bL12 from Chlamydia abortus (strain DSM 27085 / S26/3) (Chlamydophila abortus).